The following is a 332-amino-acid chain: L-lactate dehydrogenase C chain (332 aa).

S2 is subject to Blocked amino end (Ser). NAD(+) contacts are provided by residues 29–57 and R99; that span reads GNVG…DENK. Substrate contacts are provided by R106, N138, and R169. Position 138 (N138) interacts with NAD(+). H193 (proton acceptor) is an active-site residue. T248 serves as a coordination point for substrate.

It belongs to the LDH/MDH superfamily. LDH family. In terms of assembly, homotetramer. Interacts with RABL2/RABL2A; binds preferentially to GTP-bound RABL2.

Its subcellular location is the cytoplasm. The enzyme catalyses (S)-lactate + NAD(+) = pyruvate + NADH + H(+). The protein operates within fermentation; pyruvate fermentation to lactate; (S)-lactate from pyruvate: step 1/1. Its function is as follows. Possible role in sperm motility. In Rattus norvegicus (Rat), this protein is L-lactate dehydrogenase C chain (Ldhc).